Here is a 114-residue protein sequence, read N- to C-terminus: Small ribosomal subunit protein bS16 (114 aa).

A disordered region spans residues 87-114; that stretch reads AFREQPVQSAPKKKAQERAAERAKAAEA. A compositionally biased stretch (basic and acidic residues) spans 100–114; sequence KAQERAAERAKAAEA.

It belongs to the bacterial ribosomal protein bS16 family.

This chain is Small ribosomal subunit protein bS16, found in Acidiphilium cryptum (strain JF-5).